A 248-amino-acid polypeptide reads, in one-letter code: tRNA (guanine-N(1)-)-methyltransferase (248 aa).

S-adenosyl-L-methionine contacts are provided by residues glycine 113 and 133 to 138; that span reads VGDYVL.

The protein belongs to the RNA methyltransferase TrmD family. As to quaternary structure, homodimer.

The protein resides in the cytoplasm. It catalyses the reaction guanosine(37) in tRNA + S-adenosyl-L-methionine = N(1)-methylguanosine(37) in tRNA + S-adenosyl-L-homocysteine + H(+). Its function is as follows. Specifically methylates guanosine-37 in various tRNAs. This Shewanella oneidensis (strain ATCC 700550 / JCM 31522 / CIP 106686 / LMG 19005 / NCIMB 14063 / MR-1) protein is tRNA (guanine-N(1)-)-methyltransferase.